A 278-amino-acid chain; its full sequence is Pantothenate synthetase (278 aa).

Residue 28–35 coordinates ATP; that stretch reads MGNLHAGH. Catalysis depends on histidine 35, which acts as the Proton donor. Glutamine 59 lines the (R)-pantoate pocket. Glutamine 59 lines the beta-alanine pocket. 145–148 serves as a coordination point for ATP; the sequence is GKKD. Position 151 (glutamine 151) interacts with (R)-pantoate. 182-185 serves as a coordination point for ATP; that stretch reads LSSR.

It belongs to the pantothenate synthetase family. As to quaternary structure, homodimer.

The protein resides in the cytoplasm. The enzyme catalyses (R)-pantoate + beta-alanine + ATP = (R)-pantothenate + AMP + diphosphate + H(+). The protein operates within cofactor biosynthesis; (R)-pantothenate biosynthesis; (R)-pantothenate from (R)-pantoate and beta-alanine: step 1/1. Its function is as follows. Catalyzes the condensation of pantoate with beta-alanine in an ATP-dependent reaction via a pantoyl-adenylate intermediate. The protein is Pantothenate synthetase of Methylobacillus flagellatus (strain ATCC 51484 / DSM 6875 / VKM B-1610 / KT).